The sequence spans 785 residues: Phenylalanine--tRNA ligase beta subunit (785 aa).

The tRNA-binding domain maps to 39–147; it reads FPIPRGVVFA…DALPPGTPLA (109 aa). The 76-residue stretch at 399 to 474 folds into the B5 domain; it reads KPPEAIPFRP…RIQGYETIPL (76 aa). Mg(2+)-binding residues include Asp-452, Asp-458, Glu-461, and Glu-462. An FDX-ACB domain is found at 688 to 780; sequence SRHPAAFRDL…ALRARGFGLR (93 aa).

This sequence belongs to the phenylalanyl-tRNA synthetase beta subunit family. Type 1 subfamily. In terms of assembly, tetramer of two alpha and two beta subunits. Mg(2+) is required as a cofactor.

The protein resides in the cytoplasm. It catalyses the reaction tRNA(Phe) + L-phenylalanine + ATP = L-phenylalanyl-tRNA(Phe) + AMP + diphosphate + H(+). The protein is Phenylalanine--tRNA ligase beta subunit of Thermus thermophilus (strain ATCC BAA-163 / DSM 7039 / HB27).